The sequence spans 579 residues: Fatty-acid amide hydrolase 1 (579 aa).

Residues 9 to 29 form a helical membrane-spanning segment; that stretch reads AFSGPSGVALACCLVAAALAL. Residues 30–403 lie on the Cytoplasmic side of the membrane; sequence RWSSRRMARG…GDYVDSCLGD (374 aa). The active-site Charge relay system is the Lys-142. Residues Met-191, Ser-217, and 238-241 contribute to the substrate site; that span reads IGGS. Ser-217 functions as the Charge relay system in the catalytic mechanism. Ser-241 functions as the Acyl-ester intermediate in the catalytic mechanism. The residue at position 241 (Ser-241) is a Phosphoserine. An intramembrane segment occupies 404–433; the sequence is LISILRLPKWLKGLLAFMLRPLLPRLAGFL. At 434-579 the chain is on the cytoplasmic side; that stretch reads SSLRPRSAGK…RLMAPGRQPS (146 aa).

Belongs to the amidase family. Homodimer.

It localises to the endoplasmic reticulum membrane. Its subcellular location is the golgi apparatus membrane. The enzyme catalyses N-(5Z,8Z,11Z,14Z-eicosatetraenoyl)-ethanolamine + H2O = ethanolamine + (5Z,8Z,11Z,14Z)-eicosatetraenoate. It catalyses the reaction (9Z)-octadecenamide + H2O = (9Z)-octadecenoate + NH4(+). The catalysed reaction is 2-(5Z,8Z,11Z,14Z-eicosatetraenoyl)-glycerol + H2O = glycerol + (5Z,8Z,11Z,14Z)-eicosatetraenoate + H(+). It carries out the reaction 1-O-methyl-(5Z,8Z,11Z,14Z)-eicosatetraenoate + H2O = methanol + (5Z,8Z,11Z,14Z)-eicosatetraenoate + H(+). The enzyme catalyses (9Z,12Z,15Z)-octadecatrienamide + H2O = (9Z,12Z,15Z)-octadecatrienoate + NH4(+). It catalyses the reaction (5Z,8Z,11Z,14Z)-eicosatetraenamide + H2O = (5Z,8Z,11Z,14Z)-eicosatetraenoate + NH4(+). The catalysed reaction is (6Z)-octadecenamide + H2O = (6Z)-octadecenoate + NH4(+). It carries out the reaction (15Z)-tetracosenamide + H2O = (15Z)-tetracosenoate + NH4(+). The enzyme catalyses (8Z,11Z,14Z)-eicosatrienamide + H2O = (8Z,11Z,14Z)-eicosatrienoate + NH4(+). It catalyses the reaction (11Z,14Z,17Z)-eicosatrienamide + H2O = (11Z,14Z,17Z)-eicosatrienoate + NH4(+). The catalysed reaction is (11Z,14Z)-eicosadienamide + H2O = (11Z,14Z)-eicosadienoate + NH4(+). It carries out the reaction (9Z,12Z)-octadecadienamide + H2O = (9Z,12Z)-octadecadienoate + NH4(+). The enzyme catalyses tetradecamide + H2O = tetradecanoate + NH4(+). It catalyses the reaction N-(9Z-octadecenoyl) ethanolamine + H2O = ethanolamine + (9Z)-octadecenoate. The catalysed reaction is N-(9Z-octadecenoyl)-taurine + H2O = taurine + (9Z)-octadecenoate. It carries out the reaction (11Z)-eicosenamide + H2O = (11Z)-eicosenoate + NH4(+). The enzyme catalyses N-(9Z-hexadecenoyl) ethanolamine + H2O = (9Z)-hexadecenoate + ethanolamine. It catalyses the reaction N-octadecanoyl ethanolamine + H2O = octadecanoate + ethanolamine. The catalysed reaction is N-docosanoyl-ethanolamine + H2O = docosanoate + ethanolamine. It carries out the reaction N-tetracosanoyl-taurine + H2O = tetracosanoate + taurine. The enzyme catalyses N-(15Z-tetracosenoyl)-ethanolamine + H2O = (15Z)-tetracosenoate + ethanolamine. It catalyses the reaction N-docosanoyl-taurine + H2O = docosanoate + taurine. The catalysed reaction is N-(15Z-tetracosenoyl)-taurine + H2O = (15Z)-tetracosenoate + taurine. It carries out the reaction N-tricosanoyl-taurine + H2O = tricosanoate + taurine. The enzyme catalyses (9Z)-octadecenoate + glycine = N-(9Z-octadecenoyl)glycine + H2O. It catalyses the reaction N-(5Z,8Z,11Z,14Z)-eicosatetraenoyl-glycine + H2O = (5Z,8Z,11Z,14Z)-eicosatetraenoate + glycine. The catalysed reaction is N-(5Z,8Z,11Z,14Z-eicosatetraenoyl)-L-serine + H2O = (5Z,8Z,11Z,14Z)-eicosatetraenoate + L-serine. Inhibited by trifluoromethyl ketone. In terms of biological role, catalyzes the hydrolysis of endogenous amidated lipids like the sleep-inducing lipid oleamide ((9Z)-octadecenamide), the endocannabinoid anandamide (N-(5Z,8Z,11Z,14Z-eicosatetraenoyl)-ethanolamine), as well as other fatty amides, to their corresponding fatty acids, thereby regulating the signaling functions of these molecules. Also catalyzes the hydrolysis of the endocannabinoid 2-arachidonoylglycerol (2-(5Z,8Z,11Z,14Z-eicosatetraenoyl)-glycerol). FAAH cooperates with PM20D1 in the hydrolysis of amino acid-conjugated fatty acids such as N-fatty acyl glycine and N-fatty acyl-L-serine, thereby acting as a physiological regulator of specific subsets of intracellular, but not of extracellular, N-fatty acyl amino acids. The chain is Fatty-acid amide hydrolase 1 (FAAH) from Sus scrofa (Pig).